The primary structure comprises 344 residues: Biotin synthase (344 aa).

The Radical SAM core domain occupies 40-267; sequence AEVQVSTLLS…KSMVRLSAGR (228 aa). 3 residues coordinate [4Fe-4S] cluster: C55, C59, and C62. The [2Fe-2S] cluster site is built by C99, C130, C190, and R262.

Belongs to the radical SAM superfamily. Biotin synthase family. As to quaternary structure, homodimer. [4Fe-4S] cluster serves as cofactor. [2Fe-2S] cluster is required as a cofactor.

It carries out the reaction (4R,5S)-dethiobiotin + (sulfur carrier)-SH + 2 reduced [2Fe-2S]-[ferredoxin] + 2 S-adenosyl-L-methionine = (sulfur carrier)-H + biotin + 2 5'-deoxyadenosine + 2 L-methionine + 2 oxidized [2Fe-2S]-[ferredoxin]. It participates in cofactor biosynthesis; biotin biosynthesis; biotin from 7,8-diaminononanoate: step 2/2. Its function is as follows. Catalyzes the conversion of dethiobiotin (DTB) to biotin by the insertion of a sulfur atom into dethiobiotin via a radical-based mechanism. This chain is Biotin synthase, found in Xanthomonas oryzae pv. oryzae (strain PXO99A).